Consider the following 479-residue polypeptide: MSSSATVVPLAYQGNTSASVADWLNKGDNAWQLVAATVVGLQSVPGLVVLYGGVVKKKWAVNSAFMALYAFAAVWICWVTWAYNMSFGEKLLPIWGKARPALDQGLLVGRAALPATVHYRADGSVETAAVEPLYPMATVVYFQCVFAAITLILVAGSLLGRMSFLAWMIFVPLWLTFSYTVGAFSLWGGGFLFHWGVIDYCGGYVIHVSAGIAGFTAAYWVGPRAQKDRERFPPNNILFTLTGAGLLWMGWAGFNGGGPYAANSVASMAVLNTNICTAMSLIVWTCLDVIFFKKPSVVGAVQGMITGLVCITPAAGVVQGWAALVMGVLAGSIPWYTMMILHKRSKILQRVDDTLGVFHTHGVAGLLGGLLTGLFAEPTLCNLFLPVADSRGAFYGGAGGAQFGKQIAGGLFVVAWNVAVTSLICLAINLLVPLRMPDDKLEVGDDAVHGEEAYALWGDGEMYDVTKHGSDAAVAPVVV.

The next 11 membrane-spanning stretches (helical) occupy residues 34–54 (VAATVVGLQSVPGLVVLYGGV), 59–79 (WAVNSAFMALYAFAAVWICWV), 139–159 (VVYFQCVFAAITLILVAGSLL), 164–184 (FLAWMIFVPLWLTFSYTVGAF), 202–222 (GGYVIHVSAGIAGFTAAYWVG), 237–257 (ILFTLTGAGLLWMGWAGFNGG), 272–292 (NTNICTAMSLIVWTCLDVIFF), 297–317 (VVGAVQGMITGLVCITPAAGV), 321–341 (WAALVMGVLAGSIPWYTMMIL), 355–375 (LGVFHTHGVAGLLGGLLTGLF), and 407–427 (IAGGLFVVAWNVAVTSLICLA).

This sequence belongs to the ammonia transporter channel (TC 1.A.11.2) family.

The protein localises to the membrane. In terms of biological role, involved in ammonium transport. The sequence is that of Ammonium transporter 3 member 2 (AMT3-2) from Oryza sativa subsp. japonica (Rice).